The following is a 453-amino-acid chain: Homogentisate 1,2-dioxygenase (453 aa).

H306 functions as the Proton acceptor in the catalytic mechanism. The Fe cation site is built by H349 and E355. Y364 and H385 together coordinate homogentisate. H385 provides a ligand contact to Fe cation.

It belongs to the homogentisate dioxygenase family. In terms of assembly, hexamer; dimer of trimers. It depends on Fe cation as a cofactor.

The catalysed reaction is homogentisate + O2 = 4-maleylacetoacetate + H(+). The protein operates within amino-acid degradation; L-phenylalanine degradation; acetoacetate and fumarate from L-phenylalanine: step 4/6. Involved in the catabolism of homogentisate (2,5-dihydroxyphenylacetate or 2,5-OH-PhAc), a central intermediate in the degradation of phenylalanine and tyrosine. Catalyzes the oxidative ring cleavage of the aromatic ring of homogentisate to yield maleylacetoacetate. The protein is Homogentisate 1,2-dioxygenase of Rhizobium leguminosarum bv. trifolii (strain WSM2304).